Here is a 796-residue protein sequence, read N- to C-terminus: Protein SEY1 homolog (796 aa).

At 1–701 (MESSNDFSNK…AGTSISSWRN (701 aa)) the chain is on the cytoplasmic side. Residues 46-280 (GFRFNVVTIL…VPSDGFFVYS (235 aa)) enclose the GB1/RHD3-type G domain. A GTP-binding site is contributed by 56–63 (GSQSSGKS). Residues 554–626 (SLVLLLKAAR…DALTLLKVLK (73 aa)) adopt a coiled-coil conformation. A helical transmembrane segment spans residues 702-722 (IPPIFWLVLLVLGWNELRSVF). Residues 723–725 (KVL) lie on the Lumenal side of the membrane. Residues 726–746 (LRFYVVIPLLIVFYFTFSYSA) form a helical membrane-spanning segment. The Cytoplasmic segment spans residues 747–796 (TKLLGPKADQYVKPVRDKVLSLFTALLAWFVRTLHMIASKSSSFKQRPAT).

This sequence belongs to the TRAFAC class dynamin-like GTPase superfamily. GB1/RHD3 GTPase family. RHD3 subfamily.

Its subcellular location is the endoplasmic reticulum membrane. In terms of biological role, probable GTP-binding protein that may be involved in cell development. The protein is Protein SEY1 homolog of Theileria parva (East coast fever infection agent).